The sequence spans 231 residues: Small ribosomal subunit protein uS3c (231 aa).

The region spanning 39 to 123 (LRNFIKKKYI…HLRLSVKPLR (85 aa)) is the KH type-2 domain.

The protein belongs to the universal ribosomal protein uS3 family. In terms of assembly, part of the 30S ribosomal subunit.

The protein resides in the plastid. The protein localises to the chloroplast. The protein is Small ribosomal subunit protein uS3c (rps3) of Chlorella vulgaris (Green alga).